Consider the following 535-residue polypeptide: Probable histone-arginine methyltransferase 1.3 (535 aa).

N-acetylmethionine is present on Met-1. Residues 141–456 (EASSAKMYFH…QSYTIDLTLS (316 aa)) enclose the SAM-dependent MTase PRMT-type domain. Residues Gln-158, Arg-167, Gly-191, Glu-213, and Glu-243 each contribute to the S-adenosyl-L-methionine site. Residues Glu-257 and Glu-266 contribute to the active site. Ser-271 lines the S-adenosyl-L-methionine pocket. The segment at 494–517 (VAQEPPLQPQPELSTQQDIQTPND) is disordered. Polar residues predominate over residues 507–516 (STQQDIQTPN).

It belongs to the class I-like SAM-binding methyltransferase superfamily. Protein arginine N-methyltransferase family. As to quaternary structure, interacts with PQT3 in the nucleus. Post-translationally, ubiquitinated by PQT3.

The protein resides in the nucleus. Its subcellular location is the cytoplasm. The enzyme catalyses L-arginyl-[protein] + 2 S-adenosyl-L-methionine = N(omega),N(omega)-dimethyl-L-arginyl-[protein] + 2 S-adenosyl-L-homocysteine + 2 H(+). Methylates (mono- and asymmetric dimethylation) the guanidino nitrogens of arginyl residues in several proteins involved in DNA packaging, transcription regulation, and mRNA stability. Recruited to promoters upon gene activation, methylates histone H3 and activates transcription via chromatin remodeling. Positive regulator in the oxidative stress tolerance that promotes the expression of enzymes preventing oxidative stress such as APX1 and GPX1 by histone methylation (H3R17me2a). Confers tolerance to cadmium CdCl(2) and salt NaCl stresses. This is Probable histone-arginine methyltransferase 1.3 (PRMT13) from Arabidopsis thaliana (Mouse-ear cress).